Consider the following 226-residue polypeptide: ATP synthase F(0) complex subunit a (226 aa).

The next 6 membrane-spanning stretches (helical) occupy residues 9–29 (FITPTMMGLPIVILVIVFPAM), 68–88 (WALMLISLILFIGSTNLLGLV), 97–117 (QLSMNLGMAIPLWAGAVITGF), 138–158 (IPMLVVIETISLFIQPMALAI), 164–184 (ITAGHLLMHLIGGAVLALTSI), and 201–223 (ILEFAVALIQAYVFTLLVSLYLH).

It belongs to the ATPase A chain family. As to quaternary structure, component of the ATP synthase complex composed at least of ATP5F1A/subunit alpha, ATP5F1B/subunit beta, ATP5MC1/subunit c (homooctomer), MT-ATP6/subunit a, MT-ATP8/subunit 8, ATP5ME/subunit e, ATP5MF/subunit f, ATP5MG/subunit g, ATP5MK/subunit k, ATP5MJ/subunit j, ATP5F1C/subunit gamma, ATP5F1D/subunit delta, ATP5F1E/subunit epsilon, ATP5PF/subunit F6, ATP5PB/subunit b, ATP5PD/subunit d, ATP5PO/subunit OSCP. ATP synthase complex consists of a soluble F(1) head domain (subunits alpha(3) and beta(3)) - the catalytic core - and a membrane F(0) domain - the membrane proton channel (subunits c, a, 8, e, f, g, k and j). These two domains are linked by a central stalk (subunits gamma, delta, and epsilon) rotating inside the F1 region and a stationary peripheral stalk (subunits F6, b, d, and OSCP). Interacts with DNAJC30; interaction is direct.

The protein resides in the mitochondrion inner membrane. The enzyme catalyses H(+)(in) = H(+)(out). Its function is as follows. Subunit a, of the mitochondrial membrane ATP synthase complex (F(1)F(0) ATP synthase or Complex V) that produces ATP from ADP in the presence of a proton gradient across the membrane which is generated by electron transport complexes of the respiratory chain. ATP synthase complex consist of a soluble F(1) head domain - the catalytic core - and a membrane F(1) domain - the membrane proton channel. These two domains are linked by a central stalk rotating inside the F(1) region and a stationary peripheral stalk. During catalysis, ATP synthesis in the catalytic domain of F(1) is coupled via a rotary mechanism of the central stalk subunits to proton translocation. With the subunit c (ATP5MC1), forms the proton-conducting channel in the F(0) domain, that contains two crucial half-channels (inlet and outlet) that facilitate proton movement from the mitochondrial intermembrane space (IMS) into the matrix. Protons are taken up via the inlet half-channel and released through the outlet half-channel, following a Grotthuss mechanism. This chain is ATP synthase F(0) complex subunit a, found in Dugong dugon (Dugong).